A 165-amino-acid polypeptide reads, in one-letter code: LIM domain transcription factor LMO4.2 (165 aa).

LIM zinc-binding domains lie at lysine 21–asparagine 83 and glycine 85–asparagine 147.

Acts as a positive cofactor of GATA transcription factors to establish the identity of the ventral mesoderm during gastrulation. Down-regulation in the dorsal mesoderm is necessary for the proper formation of this territory since, when present, lmo4 may bind ldb1 and restrict the availability of this cofactor for Spemman organizer transcription factors. At neurula stages, suppresses primary neuron differentiation and modulates gene expression at the Isthmic Organizer of the midbrain-hindbrain boundary. This chain is LIM domain transcription factor LMO4.2 (lmo4.2), found in Xenopus tropicalis (Western clawed frog).